The chain runs to 330 residues: D-alanine--D-alanine ligase (330 aa).

One can recognise an ATP-grasp domain in the interval 120 to 326 (KLWYDALGIP…FKTFLQKAVL (207 aa)). Residue 150–205 (AFKQWGGLFVKAACQGSSVGCYKVTSEAELSKAINDAFGYSQQVLVEKAVKPRELE) coordinates ATP. Positions 280, 293, and 295 each coordinate Mg(2+).

The protein belongs to the D-alanine--D-alanine ligase family. Mg(2+) is required as a cofactor. The cofactor is Mn(2+).

The protein resides in the cytoplasm. It catalyses the reaction 2 D-alanine + ATP = D-alanyl-D-alanine + ADP + phosphate + H(+). It functions in the pathway cell wall biogenesis; peptidoglycan biosynthesis. Cell wall formation. In Aliivibrio fischeri (strain ATCC 700601 / ES114) (Vibrio fischeri), this protein is D-alanine--D-alanine ligase.